The following is a 522-amino-acid chain: Glucose-6-phosphate isomerase (522 aa).

Catalysis depends on Glu-351, which acts as the Proton donor. Active-site residues include His-382 and Lys-491.

It belongs to the GPI family.

The protein resides in the cytoplasm. It catalyses the reaction alpha-D-glucose 6-phosphate = beta-D-fructose 6-phosphate. It participates in carbohydrate biosynthesis; gluconeogenesis. It functions in the pathway carbohydrate degradation; glycolysis; D-glyceraldehyde 3-phosphate and glycerone phosphate from D-glucose: step 2/4. Catalyzes the reversible isomerization of glucose-6-phosphate to fructose-6-phosphate. The protein is Glucose-6-phosphate isomerase of Albidiferax ferrireducens (strain ATCC BAA-621 / DSM 15236 / T118) (Rhodoferax ferrireducens).